The chain runs to 830 residues: Beta-glucosidase A (830 aa).

Asp-769 is an active-site residue.

This sequence belongs to the glycosyl hydrolase 3 family.

It catalyses the reaction Hydrolysis of terminal, non-reducing beta-D-glucosyl residues with release of beta-D-glucose.. Its function is as follows. B.fibrisolvens beta-glucosidase hydrolyzes cellobiose to a limited extent, cellotriose to cellobiose and glucose, and cellotetraose and cellopentaose to predominantly glucose. This is Beta-glucosidase A (bglA) from Butyrivibrio fibrisolvens.